The primary structure comprises 202 residues: MDLEKIYKDAGAYLEGHFLLSSGNHSQFYLQSAKVLEDPALAGKLADELAAVIEKFGIKFDSVCSPALGGILAGYELARAAKKRFIFTERVEKVMSLRRGFEVKKGEKFIVCEDIITTGGSALEAAHVIESLGGEVVGFAALANRGFCKVANLGNDSKPNAKLPSDKPFFALGNFEFEIYEPEHCPLCKSGSKAIKPGSRGN.

5-phospho-alpha-D-ribose 1-diphosphate is bound by residues Lys-93 and 113 to 121; that span reads EDIITTGGS. Orotate-binding residues include Thr-117 and Arg-145.

This sequence belongs to the purine/pyrimidine phosphoribosyltransferase family. PyrE subfamily. As to quaternary structure, homodimer. Mg(2+) serves as cofactor.

It catalyses the reaction orotidine 5'-phosphate + diphosphate = orotate + 5-phospho-alpha-D-ribose 1-diphosphate. The protein operates within pyrimidine metabolism; UMP biosynthesis via de novo pathway; UMP from orotate: step 1/2. Functionally, catalyzes the transfer of a ribosyl phosphate group from 5-phosphoribose 1-diphosphate to orotate, leading to the formation of orotidine monophosphate (OMP). The sequence is that of Orotate phosphoribosyltransferase from Campylobacter concisus (strain 13826).